Consider the following 161-residue polypeptide: Putative outer membrane protein YedS (161 aa).

The signal sequence occupies residues 1–21 (MKRKVLAMLVPALLVAGAANA).

This sequence belongs to the Gram-negative porin family.

The protein resides in the cell outer membrane. This Escherichia coli (strain K12) protein is Putative outer membrane protein YedS (yedS).